The primary structure comprises 405 residues: Accessory Sec system protein translocase subunit SecY2 (405 aa).

The next 10 helical transmembrane spans lie at 14–34, 65–85, 104–124, 131–151, 156–176, 190–210, 243–263, 285–305, 343–363, and 368–388; these read MCTL…LPFV, LFSI…MFSF, MYLT…NLPV, FLVF…LVWL, ATIG…ASLP, LGLL…VVLF, GMPY…LLLL, PLWI…FAFV, FALI…LFVL, and LLKV…LFTI.

This sequence belongs to the SecY/SEC61-alpha family. SecY2 subfamily. As to quaternary structure, component of the accessory SecA2/SecY2 protein translocase complex required to export cell wall proteins. May form heterotrimers with SecE and SecG subunits.

It localises to the cell membrane. Its function is as follows. Part of the accessory SecA2/SecY2 system specifically required for export of possible cell wall proteins. The central subunit of a protein translocation channel. This Streptococcus oralis (strain Uo5) protein is Accessory Sec system protein translocase subunit SecY2.